We begin with the raw amino-acid sequence, 440 residues long: Glucoside xylosyltransferase 1 (440 aa).

At 1-6 (MRRYLR) the chain is on the cytoplasmic side. The chain crosses the membrane as a helical; Signal-anchor for type II membrane protein span at residues 7–29 (VVVLCVACGFCSLLYAFSQLAVS). Over 30 to 440 (LEEGTGGGGG…DRYARSPKEK (411 aa)) the chain is Lumenal. N-linked (GlcNAc...) asparagine glycans are attached at residues asparagine 173, asparagine 237, and asparagine 278.

It belongs to the glycosyltransferase 8 family.

The protein resides in the membrane. The catalysed reaction is 3-O-(beta-D-glucosyl)-L-seryl-[EGF-like domain protein] + UDP-alpha-D-xylose = 3-O-[alpha-D-xylosyl-(1-&gt;3)-beta-D-glucosyl]-L-seryl-[EGF-like domain protein] + UDP + H(+). Glycosyltransferase which elongates the O-linked glucose attached to EGF-like repeats in the extracellular domain of Notch proteins by catalyzing the addition of xylose. In Homo sapiens (Human), this protein is Glucoside xylosyltransferase 1 (GXYLT1).